A 104-amino-acid polypeptide reads, in one-letter code: Large ribosomal subunit protein uL24 (104 aa).

The protein belongs to the universal ribosomal protein uL24 family. Part of the 50S ribosomal subunit.

Functionally, one of two assembly initiator proteins, it binds directly to the 5'-end of the 23S rRNA, where it nucleates assembly of the 50S subunit. One of the proteins that surrounds the polypeptide exit tunnel on the outside of the subunit. This is Large ribosomal subunit protein uL24 from Corynebacterium aurimucosum (strain ATCC 700975 / DSM 44827 / CIP 107346 / CN-1) (Corynebacterium nigricans).